A 165-amino-acid chain; its full sequence is Glutamyl-tRNA(Gln) amidotransferase subunit F, mitochondrial (165 aa).

A mitochondrion-targeting transit peptide spans 1–19 (MKSILRSTTRNLITSSRRF).

It belongs to the GatF family. Subunit of the heterotrimeric GatFAB amidotransferase (AdT) complex, composed of A, B and F subunits.

Its subcellular location is the mitochondrion inner membrane. It catalyses the reaction L-glutamyl-tRNA(Gln) + L-glutamine + ATP + H2O = L-glutaminyl-tRNA(Gln) + L-glutamate + ADP + phosphate + H(+). Functionally, allows the formation of correctly charged Gln-tRNA(Gln) through the transamidation of misacylated Glu-tRNA(Gln) in the mitochondria. The reaction takes place in the presence of glutamine and ATP through an activated gamma-phospho-Glu-tRNA(Gln). Required for proper protein synthesis within the mitochondrion. This Candida albicans (strain SC5314 / ATCC MYA-2876) (Yeast) protein is Glutamyl-tRNA(Gln) amidotransferase subunit F, mitochondrial.